The following is a 438-amino-acid chain: Chromosomal replication initiator protein DnaA (438 aa).

Positions 1–71 are domain I, interacts with DnaA modulators; sequence MTTKEFLTII…CFEIYDGSKP (71 aa). The segment at 71–100 is domain II; that stretch reads PTIEIKLSNEKKSKKEILKEQTQNESTEST. A domain III, AAA+ region region spans residues 101–315; sequence ILNPSYTFDS…GVLIRINASA (215 aa). Residues G145, G147, K148, and T149 each contribute to the ATP site. A domain IV, binds dsDNA region spans residues 316–438; sequence SLLNQEITLP…LKNKIINSRE (123 aa).

Belongs to the DnaA family. Oligomerizes as a right-handed, spiral filament on DNA at oriC.

It is found in the cytoplasm. In terms of biological role, plays an essential role in the initiation and regulation of chromosomal replication. ATP-DnaA binds to the origin of replication (oriC) to initiate formation of the DNA replication initiation complex once per cell cycle. Binds the DnaA box (a 9 base pair repeat at the origin) and separates the double-stranded (ds)DNA. Forms a right-handed helical filament on oriC DNA; dsDNA binds to the exterior of the filament while single-stranded (ss)DNA is stabiized in the filament's interior. The ATP-DnaA-oriC complex binds and stabilizes one strand of the AT-rich DNA unwinding element (DUE), permitting loading of DNA polymerase. After initiation quickly degrades to an ADP-DnaA complex that is not apt for DNA replication. Binds acidic phospholipids. This is Chromosomal replication initiator protein DnaA from Aliarcobacter butzleri (strain RM4018) (Arcobacter butzleri).